The sequence spans 81 residues: Mu/omega-theraphotoxin-Hs1a (81 aa).

The first 21 residues, Met-1 to Ala-21, serve as a signal peptide directing secretion. A propeptide spanning residues Ser-22–Arg-48 is cleaved from the precursor. 3 disulfides stabilise this stretch: Cys-50–Cys-65, Cys-57–Cys-70, and Cys-64–Cys-77.

This sequence belongs to the neurotoxin 10 (Hwtx-1) family. 23 (HwTx-I) subfamily. As to expression, expressed by the venom gland.

It is found in the secreted. In terms of biological role, lethal toxin with multiple biological activities. Inhibits voltage-gated TTX-sensitive sodium channels in DRG neurons (IC(50)=55 nM) and also shows activity when directly tested on Nav1.7/SCN9A (IC(50)=25.1-630 nM). Inhibits N-type calcium channels (Cav2.2/CACNA1B (IC(50)=100 nM)). Also blocks neuromuscular transmission. In vivo, intrathecal injected toxin shows analgesic activity in the rat formalin-induced pain model, without induction of motor dysfunction in rats. The chain is Mu/omega-theraphotoxin-Hs1a from Cyriopagopus schmidti (Chinese bird spider).